The sequence spans 194 residues: Pyridoxal 5'-phosphate synthase subunit PdxT (194 aa).

Residue 50 to 52 (GES) participates in L-glutamine binding. C82 serves as the catalytic Nucleophile. L-glutamine-binding positions include R109 and 136–137 (IR). Catalysis depends on charge relay system residues H172 and E174.

The protein belongs to the glutaminase PdxT/SNO family. In the presence of PdxS, forms a dodecamer of heterodimers. Only shows activity in the heterodimer.

The catalysed reaction is aldehydo-D-ribose 5-phosphate + D-glyceraldehyde 3-phosphate + L-glutamine = pyridoxal 5'-phosphate + L-glutamate + phosphate + 3 H2O + H(+). It catalyses the reaction L-glutamine + H2O = L-glutamate + NH4(+). Its pathway is cofactor biosynthesis; pyridoxal 5'-phosphate biosynthesis. Catalyzes the hydrolysis of glutamine to glutamate and ammonia as part of the biosynthesis of pyridoxal 5'-phosphate. The resulting ammonia molecule is channeled to the active site of PdxS. The chain is Pyridoxal 5'-phosphate synthase subunit PdxT from Streptococcus pneumoniae (strain CGSP14).